Reading from the N-terminus, the 108-residue chain is Nitrogenase-stabilizing/protective protein NifW (108 aa).

This sequence belongs to the NifW family. As to quaternary structure, homotrimer; associates with NifD.

Its function is as follows. May protect the nitrogenase Fe-Mo protein from oxidative damage. The sequence is that of Nitrogenase-stabilizing/protective protein NifW from Zymomonas mobilis subsp. mobilis (strain ATCC 31821 / ZM4 / CP4).